The following is a 185-amino-acid chain: Elongation factor P 1 (185 aa).

This sequence belongs to the elongation factor P family.

The protein localises to the cytoplasm. The protein operates within protein biosynthesis; polypeptide chain elongation. Its function is as follows. Involved in peptide bond synthesis. Stimulates efficient translation and peptide-bond synthesis on native or reconstituted 70S ribosomes in vitro. Probably functions indirectly by altering the affinity of the ribosome for aminoacyl-tRNA, thus increasing their reactivity as acceptors for peptidyl transferase. The chain is Elongation factor P 1 (efp1) from Chlamydia caviae (strain ATCC VR-813 / DSM 19441 / 03DC25 / GPIC) (Chlamydophila caviae).